Reading from the N-terminus, the 330-residue chain is Ketol-acid reductoisomerase (NADP(+)) (330 aa).

The KARI N-terminal Rossmann domain occupies Ala2 to Thr181. Residues Tyr25–Gln28, Arg48, Ser52, and Asp82–Gln85 contribute to the NADP(+) site. The active site involves His107. Gly133 contacts NADP(+). The KARI C-terminal knotted domain maps to Thr182 to Ile327. Asp190, Glu194, Glu226, and Glu230 together coordinate Mg(2+). Ser251 serves as a coordination point for substrate.

The protein belongs to the ketol-acid reductoisomerase family. The cofactor is Mg(2+).

The enzyme catalyses (2R)-2,3-dihydroxy-3-methylbutanoate + NADP(+) = (2S)-2-acetolactate + NADPH + H(+). It catalyses the reaction (2R,3R)-2,3-dihydroxy-3-methylpentanoate + NADP(+) = (S)-2-ethyl-2-hydroxy-3-oxobutanoate + NADPH + H(+). Its pathway is amino-acid biosynthesis; L-isoleucine biosynthesis; L-isoleucine from 2-oxobutanoate: step 2/4. It functions in the pathway amino-acid biosynthesis; L-valine biosynthesis; L-valine from pyruvate: step 2/4. Functionally, involved in the biosynthesis of branched-chain amino acids (BCAA). Catalyzes an alkyl-migration followed by a ketol-acid reduction of (S)-2-acetolactate (S2AL) to yield (R)-2,3-dihydroxy-isovalerate. In the isomerase reaction, S2AL is rearranged via a Mg-dependent methyl migration to produce 3-hydroxy-3-methyl-2-ketobutyrate (HMKB). In the reductase reaction, this 2-ketoacid undergoes a metal-dependent reduction by NADPH to yield (R)-2,3-dihydroxy-isovalerate. The sequence is that of Ketol-acid reductoisomerase (NADP(+)) from Macrococcus caseolyticus (strain JCSC5402) (Macrococcoides caseolyticum).